The primary structure comprises 144 residues: Flagellar assembly factor FliW (144 aa).

Belongs to the FliW family. As to quaternary structure, monomer. One copy interacts with the each alpha-helical wing of the CsrA homodimer, yielding a FliW-CsrA(2)-FliW complex. Comparison with a CsrA-mRNA structure (2JPP) suggests CsrA cannot bind both mRNA and FliW at the same time. Interacts with flagellin.

The protein resides in the cytoplasm. Its function is as follows. Acts as an anti-CsrA protein, binds CsrA and prevents it from repressing translation of its target genes, one of which is flagellin. Binds to flagellin and participates in the assembly of the flagellum. Allosterically inhibits CsrA binding to mRNA in a non-competitive fashion by preventing CsrA binding to the 5'-UTR. The polypeptide is Flagellar assembly factor FliW (Geobacillus thermodenitrificans (strain NG80-2)).